The primary structure comprises 1380 residues: DNA-directed RNA polymerase subunit beta (1380 aa).

Belongs to the RNA polymerase beta chain family. As to quaternary structure, the RNAP catalytic core consists of 2 alpha, 1 beta, 1 beta' and 1 omega subunit. When a sigma factor is associated with the core the holoenzyme is formed, which can initiate transcription.

It carries out the reaction RNA(n) + a ribonucleoside 5'-triphosphate = RNA(n+1) + diphosphate. DNA-dependent RNA polymerase catalyzes the transcription of DNA into RNA using the four ribonucleoside triphosphates as substrates. The protein is DNA-directed RNA polymerase subunit beta of Ehrlichia canis (strain Jake).